Consider the following 325-residue polypeptide: tRNA(Ile)-lysidine synthase (325 aa).

Serine 34–serine 39 contributes to the ATP binding site.

Belongs to the tRNA(Ile)-lysidine synthase family.

The protein resides in the cytoplasm. The catalysed reaction is cytidine(34) in tRNA(Ile2) + L-lysine + ATP = lysidine(34) in tRNA(Ile2) + AMP + diphosphate + H(+). Ligates lysine onto the cytidine present at position 34 of the AUA codon-specific tRNA(Ile) that contains the anticodon CAU, in an ATP-dependent manner. Cytidine is converted to lysidine, thus changing the amino acid specificity of the tRNA from methionine to isoleucine. The chain is tRNA(Ile)-lysidine synthase from Rhodococcus opacus (strain B4).